The following is a 303-amino-acid chain: Mitochondrial carrier homolog 2 (303 aa).

N-acetylalanine is present on Ala2. The Mitochondrial intermembrane segment spans residues 2-15; sequence ADAASQVLLGSGLT. Solcar repeat units lie at residues 2–98 and 118–206; these read ADAA…YQES and DHVI…VNTY. The chain crosses the membrane as a helical span at residues 16-36; that stretch reads ILSQPLMYVKVLIQVGYEPLP. The Cytoplasmic segment spans residues 37–77; the sequence is PTIGRNIFGRQVCQLPGLFSYAQHIASIDGRRGLFTGLTPR. The chain crosses the membrane as a helical span at residues 78–92; sequence LCSGVLGTVVHGKVL. Residues 93-135 are Mitochondrial intermembrane-facing; that stretch reads QHYQESDKGEELGPGNVQKEVSSSFDHVIKETTREMIARSAAT. A helical membrane pass occupies residues 136 to 156; that stretch reads LITHPFHVITLRSMVQFIGRE. The Cytoplasmic segment spans residues 157 to 180; it reads SKYCGLCDSIITIYREEGILGFFA. Residues 181 to 199 traverse the membrane as a helical segment; the sequence is GLVPRLLGDILSLWLCNSL. Residues 200–231 lie on the Mitochondrial intermembrane side of the membrane; the sequence is AYLVNTYALDSGVSTMNEMKSYSQAVTGFFAS. A helical transmembrane segment spans residues 232–252; the sequence is MLTYPFVLVSNLMAVNNCGLA. The Cytoplasmic segment spans residues 253-280; that stretch reads GGCPPYSPIYTSWIDCWCMLQKEGNMSR. Residues 281-303 traverse the membrane as a helical segment; that stretch reads GNSLFFRKVPFGKTYCCDLKMLI.

The protein belongs to the mitochondrial carrier (TC 2.A.29) family. Interacts with p15BID.

It is found in the mitochondrion outer membrane. Its function is as follows. Protein insertase that mediates insertion of transmembrane proteins into the mitochondrial outer membrane. Catalyzes insertion of proteins with alpha-helical transmembrane regions, such as signal-anchored, tail-anchored and multi-pass membrane proteins. Does not mediate insertion of beta-barrel transmembrane proteins. Also acts as a receptor for the truncated form of pro-apoptotic BH3-interacting domain death agonist (p15 BID) and has therefore a critical function in apoptosis. Regulates the quiescence/cycling of hematopoietic stem cells (HSCs). Acts as a regulator of mitochondrial fusion, essential for the naive-to-primed interconversion of embryonic stem cells (ESCs). Acts as a regulator of lipid homeostasis and has a regulatory role in adipocyte differentiation and biology. The chain is Mitochondrial carrier homolog 2 from Homo sapiens (Human).